The primary structure comprises 477 residues: Trigger factor (477 aa).

The PPIase FKBP-type domain occupies 169-254 (EDRVTIDYLG…VKEVAKPNEL (86 aa)). The interval 435–477 (VSKEELTAEDEDAASEAKPAKKAAAKKKAAPKKKAEEGKSEEA) is disordered. Residues 454–466 (AKKAAAKKKAAPK) show a composition bias toward basic residues. Residues 467–477 (KKAEEGKSEEA) show a composition bias toward basic and acidic residues.

This sequence belongs to the FKBP-type PPIase family. Tig subfamily.

The protein resides in the cytoplasm. The enzyme catalyses [protein]-peptidylproline (omega=180) = [protein]-peptidylproline (omega=0). Functionally, involved in protein export. Acts as a chaperone by maintaining the newly synthesized protein in an open conformation. Functions as a peptidyl-prolyl cis-trans isomerase. This Brucella melitensis biotype 1 (strain ATCC 23456 / CCUG 17765 / NCTC 10094 / 16M) protein is Trigger factor (tig).